Consider the following 142-residue polypeptide: Hemoglobin subunit alpha-2 (142 aa).

Serine 1 is modified (N-acetylserine). Residues 1-142 form the Globin domain; that stretch reads SLSTKDKETV…LSRALSEKYR (142 aa). O2 is bound at residue histidine 59. Histidine 88 provides a ligand contact to heme b.

The protein belongs to the globin family. In terms of assembly, hb2 is a heterotetramer of two alpha-2 chains and two beta chains. Red blood cells.

Its function is as follows. Involved in oxygen transport from gills to the various peripheral tissues. The sequence is that of Hemoglobin subunit alpha-2 (hba2) from Trematomus newnesi (Dusky notothen).